A 188-amino-acid chain; its full sequence is dCTP deaminase (188 aa).

Residues 111 to 116, 135 to 137, Q156, Y170, and Q180 contribute to the dCTP site; these read KSTYAR and TLE. The active-site Proton donor/acceptor is E137.

This sequence belongs to the dCTP deaminase family. Homotrimer.

The catalysed reaction is dCTP + H2O + H(+) = dUTP + NH4(+). It participates in pyrimidine metabolism; dUMP biosynthesis; dUMP from dCTP (dUTP route): step 1/2. Functionally, catalyzes the deamination of dCTP to dUTP. In Pseudomonas fluorescens (strain SBW25), this protein is dCTP deaminase.